A 113-amino-acid chain; its full sequence is Putative pterin-4-alpha-carbinolamine dehydratase (113 aa).

It belongs to the pterin-4-alpha-carbinolamine dehydratase family.

The catalysed reaction is (4aS,6R)-4a-hydroxy-L-erythro-5,6,7,8-tetrahydrobiopterin = (6R)-L-erythro-6,7-dihydrobiopterin + H2O. The sequence is that of Putative pterin-4-alpha-carbinolamine dehydratase from Rickettsia bellii (strain OSU 85-389).